The primary structure comprises 100 residues: Urease subunit gamma (100 aa).

Belongs to the urease gamma subunit family. In terms of assembly, heterotrimer of UreA (gamma), UreB (beta) and UreC (alpha) subunits. Three heterotrimers associate to form the active enzyme.

It is found in the cytoplasm. It catalyses the reaction urea + 2 H2O + H(+) = hydrogencarbonate + 2 NH4(+). It participates in nitrogen metabolism; urea degradation; CO(2) and NH(3) from urea (urease route): step 1/1. The sequence is that of Urease subunit gamma from Azotobacter vinelandii (strain DJ / ATCC BAA-1303).